The primary structure comprises 479 residues: NADH-quinone oxidoreductase subunit N 2 (479 aa).

A run of 14 helical transmembrane segments spans residues 4 to 24, 43 to 63, 67 to 87, 99 to 119, 121 to 141, 159 to 179, 201 to 221, 239 to 259, 267 to 287, 294 to 314, 318 to 338, 364 to 384, 401 to 421, and 444 to 464; these read FVSF…FVVT, GVLV…SGAY, AFSQ…GILS, PEYF…VSSI, VITL…MVAM, IMFG…LYGL, AVTG…VFPF, LIAS…VSLA, ATLL…IALV, LLGF…VAMD, FASA…CFVV, LAVT…FVGF, ALVV…LQIV, and ALCV…AFTI.

Belongs to the complex I subunit 2 family. NDH-1 is composed of 14 different subunits. Subunits NuoA, H, J, K, L, M, N constitute the membrane sector of the complex.

Its subcellular location is the cell inner membrane. The catalysed reaction is a quinone + NADH + 5 H(+)(in) = a quinol + NAD(+) + 4 H(+)(out). In terms of biological role, NDH-1 shuttles electrons from NADH, via FMN and iron-sulfur (Fe-S) centers, to quinones in the respiratory chain. The immediate electron acceptor for the enzyme in this species is believed to be ubiquinone. Couples the redox reaction to proton translocation (for every two electrons transferred, four hydrogen ions are translocated across the cytoplasmic membrane), and thus conserves the redox energy in a proton gradient. This is NADH-quinone oxidoreductase subunit N 2 from Opitutus terrae (strain DSM 11246 / JCM 15787 / PB90-1).